The chain runs to 247 residues: Sec-independent protein translocase protein TatC (247 aa).

5 helical membrane passes run 21-41 (IILL…KPLI), 71-91 (AFII…WAFV), 109-129 (ITFL…FPFI), 154-174 (FLLQ…VIML), and 195-215 (FCLL…HLMI).

This sequence belongs to the TatC family. Forms a complex with TatA.

Its subcellular location is the cell membrane. Functionally, part of the twin-arginine translocation (Tat) system that transports large folded proteins containing a characteristic twin-arginine motif in their signal peptide across membranes. The sequence is that of Sec-independent protein translocase protein TatC from Listeria innocua serovar 6a (strain ATCC BAA-680 / CLIP 11262).